The sequence spans 340 residues: DNA repair protein RAD51 homolog B (340 aa).

A disordered region spans residues methionine 1 to glycine 22. One can recognise a HhH domain in the interval threonine 49–alanine 78. Glycine 128 to threonine 135 contributes to the ATP binding site.

It belongs to the RecA family. RAD51 subfamily. Self-associates and may interact with XRCC3 homolog. As to expression, highly expressed in mitotic and meiotic tissues, but low levels in differentiated tissues.

It is found in the nucleus. Binds to single and double-stranded DNA and exhibits DNA-dependent ATPase activity. Unwinds duplex DNA. Component of the meiotic recombination pathway. Seems to play a role in mediating chromosome homology search, chromosome pairing and synapsis at early stages and probably chromosome crossing-over at later stages in meiosis. Probably is involved in the repair of meiotic double strand breaks (DBSs) and in homologous recombination. The sequence is that of DNA repair protein RAD51 homolog B (RAD51B) from Zea mays (Maize).